The chain runs to 511 residues: NAD(P)H-quinone oxidoreductase subunit 2, chloroplastic (511 aa).

14 helical membrane passes run 15–35 (LLPE…DLTF), 39–59 (VLSW…VVLL), 78–98 (SLSI…ILLS), 108–128 (ALTE…LLSG), 132–152 (LIMI…LTGY), 167–187 (LLIG…LYGL), 210–230 (FASW…VAAA), 244–264 (PTPV…ALAT), 278–298 (WHLL…LIAI), 306–326 (MLGY…IAGN), 334–354 (LVYM…IILF), 377–397 (VFCF…AGFF), 410–430 (GFYI…YYYL), and 466–486 (LGIG…NPII).

It belongs to the complex I subunit 2 family. As to quaternary structure, NDH is composed of at least 16 different subunits, 5 of which are encoded in the nucleus.

The protein resides in the plastid. It localises to the chloroplast thylakoid membrane. The catalysed reaction is a plastoquinone + NADH + (n+1) H(+)(in) = a plastoquinol + NAD(+) + n H(+)(out). It catalyses the reaction a plastoquinone + NADPH + (n+1) H(+)(in) = a plastoquinol + NADP(+) + n H(+)(out). Its function is as follows. NDH shuttles electrons from NAD(P)H:plastoquinone, via FMN and iron-sulfur (Fe-S) centers, to quinones in the photosynthetic chain and possibly in a chloroplast respiratory chain. The immediate electron acceptor for the enzyme in this species is believed to be plastoquinone. Couples the redox reaction to proton translocation, and thus conserves the redox energy in a proton gradient. The chain is NAD(P)H-quinone oxidoreductase subunit 2, chloroplastic from Chlorokybus atmophyticus (Soil alga).